We begin with the raw amino-acid sequence, 256 residues long: Metallo-beta-lactamase type 2 (256 aa).

The first 29 residues, 1-29 (MKNTLLKLGVCVSLLGITPFVSTISSVQA), serve as a signal peptide directing secretion. His-115, His-117, Asp-119, His-178, and Cys-197 together coordinate Zn(2+). Lys-200 and Asn-209 together coordinate substrate. His-239 provides a ligand contact to Zn(2+).

The protein belongs to the metallo-beta-lactamase superfamily. Class-B beta-lactamase family. Monomer. It depends on Zn(2+) as a cofactor.

Its subcellular location is the periplasm. The enzyme catalyses a beta-lactam + H2O = a substituted beta-amino acid. Its activity is regulated as follows. Inhibited by chelating agents such as EDTA. Confers resistance to the different beta-lactams antibiotics (penicillin, cephalosporin and carbapenem) via the hydrolysis of the beta-lactam ring. Benzylpenicillin is a better substrate than cephalosporin C and ampicillin. This Bacillus cereus protein is Metallo-beta-lactamase type 2.